Here is a 613-residue protein sequence, read N- to C-terminus: Dihydroxy-acid dehydratase (613 aa).

Asp81 lines the Mg(2+) pocket. Cys122 contacts [2Fe-2S] cluster. Asp123 and Lys124 together coordinate Mg(2+). Lys124 bears the N6-carboxylysine mark. A [2Fe-2S] cluster-binding site is contributed by Cys195. Glu491 contacts Mg(2+). Ser517 functions as the Proton acceptor in the catalytic mechanism.

Belongs to the IlvD/Edd family. Homodimer. [2Fe-2S] cluster is required as a cofactor. It depends on Mg(2+) as a cofactor.

It carries out the reaction (2R)-2,3-dihydroxy-3-methylbutanoate = 3-methyl-2-oxobutanoate + H2O. The catalysed reaction is (2R,3R)-2,3-dihydroxy-3-methylpentanoate = (S)-3-methyl-2-oxopentanoate + H2O. It functions in the pathway amino-acid biosynthesis; L-isoleucine biosynthesis; L-isoleucine from 2-oxobutanoate: step 3/4. It participates in amino-acid biosynthesis; L-valine biosynthesis; L-valine from pyruvate: step 3/4. Functionally, functions in the biosynthesis of branched-chain amino acids. Catalyzes the dehydration of (2R,3R)-2,3-dihydroxy-3-methylpentanoate (2,3-dihydroxy-3-methylvalerate) into 2-oxo-3-methylpentanoate (2-oxo-3-methylvalerate) and of (2R)-2,3-dihydroxy-3-methylbutanoate (2,3-dihydroxyisovalerate) into 2-oxo-3-methylbutanoate (2-oxoisovalerate), the penultimate precursor to L-isoleucine and L-valine, respectively. This chain is Dihydroxy-acid dehydratase, found in Aeromonas salmonicida (strain A449).